Consider the following 417-residue polypeptide: UDP-N-acetylglucosamine 1-carboxyvinyltransferase (417 aa).

A phosphoenolpyruvate-binding site is contributed by 22–23 (KN). Arg-92 contacts UDP-N-acetyl-alpha-D-glucosamine. Cys-116 acts as the Proton donor in catalysis. Cys-116 is modified (2-(S-cysteinyl)pyruvic acid O-phosphothioketal). UDP-N-acetyl-alpha-D-glucosamine contacts are provided by Asp-304 and Ile-326.

This sequence belongs to the EPSP synthase family. MurA subfamily.

It localises to the cytoplasm. The catalysed reaction is phosphoenolpyruvate + UDP-N-acetyl-alpha-D-glucosamine = UDP-N-acetyl-3-O-(1-carboxyvinyl)-alpha-D-glucosamine + phosphate. Its pathway is cell wall biogenesis; peptidoglycan biosynthesis. Cell wall formation. Adds enolpyruvyl to UDP-N-acetylglucosamine. In Geotalea daltonii (strain DSM 22248 / JCM 15807 / FRC-32) (Geobacter daltonii), this protein is UDP-N-acetylglucosamine 1-carboxyvinyltransferase.